The sequence spans 305 residues: N-acetylneuraminate lyase (305 aa).

Aceneuramate-binding residues include T51 and T52. Y143 (proton donor) is an active-site residue. The active-site Schiff-base intermediate with substrate is K173. Residues T175, G197, D199, E200, and S216 each contribute to the aceneuramate site.

Belongs to the DapA family. NanA subfamily. In terms of assembly, homotetramer.

Its subcellular location is the cytoplasm. The enzyme catalyses aceneuramate = aldehydo-N-acetyl-D-mannosamine + pyruvate. The protein operates within amino-sugar metabolism; N-acetylneuraminate degradation. Its function is as follows. Catalyzes the cleavage of N-acetylneuraminic acid (sialic acid) to form pyruvate and N-acetylmannosamine via a Schiff base intermediate. It prevents sialic acids from being recycled and returning to the cell surface. Involved in the N-glycolylneuraminic acid (Neu5Gc) degradation pathway. This chain is N-acetylneuraminate lyase, found in Xenopus tropicalis (Western clawed frog).